A 338-amino-acid chain; its full sequence is Lipoate-protein ligase A (338 aa).

The region spanning 29 to 216 is the BPL/LPL catalytic domain; sequence PATQRVLFLW…AFFAHYGERV (188 aa). ATP is bound by residues R71, 76 to 79, and K134; that span reads GAVF. K134 lines the (R)-lipoate pocket.

This sequence belongs to the LplA family. In terms of assembly, monomer.

Its subcellular location is the cytoplasm. It catalyses the reaction L-lysyl-[lipoyl-carrier protein] + (R)-lipoate + ATP = N(6)-[(R)-lipoyl]-L-lysyl-[lipoyl-carrier protein] + AMP + diphosphate + H(+). It functions in the pathway protein modification; protein lipoylation via exogenous pathway; protein N(6)-(lipoyl)lysine from lipoate: step 1/2. The protein operates within protein modification; protein lipoylation via exogenous pathway; protein N(6)-(lipoyl)lysine from lipoate: step 2/2. In terms of biological role, catalyzes both the ATP-dependent activation of exogenously supplied lipoate to lipoyl-AMP and the transfer of the activated lipoyl onto the lipoyl domains of lipoate-dependent enzymes. This is Lipoate-protein ligase A from Shigella dysenteriae serotype 1 (strain Sd197).